Consider the following 211-residue polypeptide: Molybdenum cofactor guanylyltransferase (211 aa).

Residues 12–14 (LAG), lysine 25, asparagine 53, aspartate 71, and aspartate 101 each bind GTP. Aspartate 101 is a Mg(2+) binding site.

It belongs to the MobA family. Monomer. The cofactor is Mg(2+).

It localises to the cytoplasm. The enzyme catalyses Mo-molybdopterin + GTP + H(+) = Mo-molybdopterin guanine dinucleotide + diphosphate. Its function is as follows. Transfers a GMP moiety from GTP to Mo-molybdopterin (Mo-MPT) cofactor (Moco or molybdenum cofactor) to form Mo-molybdopterin guanine dinucleotide (Mo-MGD) cofactor. The protein is Molybdenum cofactor guanylyltransferase of Acidovorax sp. (strain JS42).